The following is a 156-amino-acid chain: Small ribosomal subunit protein uS7 (156 aa).

This sequence belongs to the universal ribosomal protein uS7 family. Part of the 30S ribosomal subunit. Contacts proteins S9 and S11.

One of the primary rRNA binding proteins, it binds directly to 16S rRNA where it nucleates assembly of the head domain of the 30S subunit. Is located at the subunit interface close to the decoding center, probably blocks exit of the E-site tRNA. This Brevibacillus brevis (strain 47 / JCM 6285 / NBRC 100599) protein is Small ribosomal subunit protein uS7.